The sequence spans 181 residues: uncharacterized protein (181 aa).

This is an uncharacterized protein from Escherichia coli (strain K12).